Reading from the N-terminus, the 200-residue chain is LHFPL tetraspan subfamily member 6 protein (200 aa).

An N-terminal signal peptide occupies residues M1–A21. A run of 3 helical transmembrane segments spans residues I84–L104, G123–W143, and I166–W186.

The protein belongs to the LHFP family. Pancreas, kidney, skeletal muscle, liver, lung brain, heart, colon, small intestine, uterus, testis, prostate, thymus, spleen and placenta.

Its subcellular location is the membrane. The polypeptide is LHFPL tetraspan subfamily member 6 protein (Homo sapiens (Human)).